Here is a 151-residue protein sequence, read N- to C-terminus: Large ribosomal subunit protein uL15 (151 aa).

The disordered stretch occupies residues methionine 1–leucine 60.

The protein belongs to the universal ribosomal protein uL15 family. In terms of assembly, part of the 50S ribosomal subunit.

Its function is as follows. Binds to the 23S rRNA. This is Large ribosomal subunit protein uL15 from Streptomyces avermitilis (strain ATCC 31267 / DSM 46492 / JCM 5070 / NBRC 14893 / NCIMB 12804 / NRRL 8165 / MA-4680).